Here is a 469-residue protein sequence, read N- to C-terminus: Probable ribonuclease FAU-1 (469 aa).

This sequence belongs to the FAU-1 family.

Functionally, probable RNase involved in rRNA stability through maturation and/or degradation of precursor rRNAs. Binds to RNA in loop regions with AU-rich sequences. The protein is Probable ribonuclease FAU-1 of Pyrococcus horikoshii (strain ATCC 700860 / DSM 12428 / JCM 9974 / NBRC 100139 / OT-3).